The primary structure comprises 276 residues: Glutathione S-transferase-like protein ustS (276 aa).

The 94-residue stretch at 16-109 (STLPGTSKSW…HLDETYPDPP (94 aa)) folds into the GST N-terminal domain.

It belongs to the GST superfamily.

The protein operates within mycotoxin biosynthesis. Functionally, glutathione S-transferase-like protein; part of the gene cluster that mediates the biosynthesis of the secondary metabolite ustiloxin B, an antimitotic tetrapeptide. First, ustA is processed by the subtilisin-like endoprotease Kex2 that is outside the ustiloxin B gene cluster, at the C-terminal side of Arg-Lys, after transfer to Golgi apparatus through the endoplasmic reticulum (ER). Cleavage by KEX2 generates 16 peptides YAIG-I to YAIG-XVI. To process the precursor peptide further, at least two peptidases are necessary to cleave the N-terminal and C-terminal sides of the Tyr-Ala-Ile-Gly core peptide which serves as backbone for the synthesis of ustiloxin B, through cyclization and modification of the tyrosine with a non-protein coding amino acid, norvaline. One of the two peptidases must be the serine peptidase ustP; and the other pepdidase is probably ustH. Macrocyclization of the core peptide derived from ustA requires the tyrosinase ustQ, as well as the homologous oxidases ustYa and ustYb, and leads to the production of the first cyclization product N-desmethylustiloxin F. For the formation of N-desmethylustiloxin F, three oxidation steps are required, hydroxylation at the benzylic position, hydroxylation at either the aromatic ring of Tyr or beta-position of Ile, and oxidative cyclization. UstQ may catalyze the oxidation of a phenol moiety, whereas the ustYa and ustYb are most likely responsible for the remaining two-step oxidations. N-desmethylustiloxin F is then methylated by ustM to yield ustiloxin F which in turn substrate of the cytochrome P450 monooxygenase ustC which catalyzes the formation of S-deoxyustiloxin H. The flavoprotein monooxygenases ustF1 and ustF2 then participate in the modification of the side chain of S-deoxyustiloxin H, leading to the synthesis of an oxime intermediate, via ustiloxin H. Finally, carboxylative dehydration performed by the cysteine desulfurase-like protein ustD yields ustiloxin B. In Aspergillus flavus (strain ATCC 200026 / FGSC A1120 / IAM 13836 / NRRL 3357 / JCM 12722 / SRRC 167), this protein is Glutathione S-transferase-like protein ustS.